A 159-amino-acid polypeptide reads, in one-letter code: Phosphopantetheine adenylyltransferase (159 aa).

Residue Ser9 coordinates substrate. Residues 9–10 (SF) and His17 contribute to the ATP site. 3 residues coordinate substrate: Lys41, Ile73, and Lys87. Residues 88 to 90 (GLR), Glu98, and 122 to 128 (WGYVSSS) each bind ATP.

Belongs to the bacterial CoaD family. Homohexamer. The cofactor is Mg(2+).

It localises to the cytoplasm. The catalysed reaction is (R)-4'-phosphopantetheine + ATP + H(+) = 3'-dephospho-CoA + diphosphate. Its pathway is cofactor biosynthesis; coenzyme A biosynthesis; CoA from (R)-pantothenate: step 4/5. Its function is as follows. Reversibly transfers an adenylyl group from ATP to 4'-phosphopantetheine, yielding dephospho-CoA (dPCoA) and pyrophosphate. The polypeptide is Phosphopantetheine adenylyltransferase (Nocardioides sp. (strain ATCC BAA-499 / JS614)).